Reading from the N-terminus, the 338-residue chain is Isopentenyl-diphosphate delta-isomerase (338 aa).

Arg-13–Lys-14 lines the substrate pocket. Residues Ala-72–Thr-74, Ser-102, and Asn-130 contribute to the FMN site. Residue Ser-102 to Arg-104 coordinates substrate. Gln-165 serves as a coordination point for substrate. Mg(2+) is bound at residue Glu-166. FMN is bound by residues Lys-197, Thr-227, Gly-274–Arg-276, and Ala-295–Arg-296.

Belongs to the IPP isomerase type 2 family. Homooctamer. Dimer of tetramers. FMN serves as cofactor. Requires NADPH as cofactor. It depends on Mg(2+) as a cofactor.

Its subcellular location is the cytoplasm. It carries out the reaction isopentenyl diphosphate = dimethylallyl diphosphate. Involved in the biosynthesis of isoprenoids. Catalyzes the 1,3-allylic rearrangement of the homoallylic substrate isopentenyl (IPP) to its allylic isomer, dimethylallyl diphosphate (DMAPP). This Deinococcus radiodurans (strain ATCC 13939 / DSM 20539 / JCM 16871 / CCUG 27074 / LMG 4051 / NBRC 15346 / NCIMB 9279 / VKM B-1422 / R1) protein is Isopentenyl-diphosphate delta-isomerase.